Here is a 344-residue protein sequence, read N- to C-terminus: UDP-N-acetylenolpyruvoylglucosamine reductase (344 aa).

One can recognise an FAD-binding PCMH-type domain in the interval Ile19 to Asn189. The active site involves Arg165. The Proton donor role is filled by Ser235. Glu331 is a catalytic residue.

The protein belongs to the MurB family. FAD is required as a cofactor.

The protein resides in the cytoplasm. It catalyses the reaction UDP-N-acetyl-alpha-D-muramate + NADP(+) = UDP-N-acetyl-3-O-(1-carboxyvinyl)-alpha-D-glucosamine + NADPH + H(+). Its pathway is cell wall biogenesis; peptidoglycan biosynthesis. Its function is as follows. Cell wall formation. The sequence is that of UDP-N-acetylenolpyruvoylglucosamine reductase from Buchnera aphidicola subsp. Schizaphis graminum (strain Sg).